Reading from the N-terminus, the 603-residue chain is Glutamyl-tRNA(Gln) amidotransferase subunit B, mitochondrial (603 aa).

Disordered stretches follow at residues Arg-38 to Ala-61 and Glu-72 to His-91. Residues Trp-42–Ser-58 show a composition bias toward polar residues.

This sequence belongs to the GatB/GatE family. GatB subfamily. Subunit of the heterotrimeric GatCAB amidotransferase (AdT) complex, composed of A, B and C subunits.

It is found in the mitochondrion. The enzyme catalyses L-glutamyl-tRNA(Gln) + L-glutamine + ATP + H2O = L-glutaminyl-tRNA(Gln) + L-glutamate + ADP + phosphate + H(+). Allows the formation of correctly charged Gln-tRNA(Gln) through the transamidation of misacylated Glu-tRNA(Gln) in the mitochondria. The reaction takes place in the presence of glutamine and ATP through an activated gamma-phospho-Glu-tRNA(Gln). The sequence is that of Glutamyl-tRNA(Gln) amidotransferase subunit B, mitochondrial from Paracoccidioides brasiliensis (strain Pb18).